Here is a 244-residue protein sequence, read N- to C-terminus: uncharacterized protein (244 aa).

2 stretches are compositionally biased toward basic and acidic residues: residues 1–10 (MNDPFARMET) and 100–127 (GTRG…HGEE). Disordered regions lie at residues 1 to 79 (MNDP…GEEL), 100 to 130 (GTRG…EPNY), and 219 to 244 (TGAS…EIKL).

This is an uncharacterized protein from Homo sapiens (Human).